We begin with the raw amino-acid sequence, 194 residues long: dITP/XTP pyrophosphatase (194 aa).

7–12 (SGNVNK) is a substrate binding site. Mg(2+) contacts are provided by Glu38 and Asp67. Asp67 acts as the Proton acceptor in catalysis. Residues Ser68, 151–154 (FGYD), Lys174, and 179–180 (HR) each bind substrate.

The protein belongs to the HAM1 NTPase family. In terms of assembly, homodimer. Mg(2+) serves as cofactor.

It catalyses the reaction XTP + H2O = XMP + diphosphate + H(+). The catalysed reaction is dITP + H2O = dIMP + diphosphate + H(+). The enzyme catalyses ITP + H2O = IMP + diphosphate + H(+). Pyrophosphatase that catalyzes the hydrolysis of nucleoside triphosphates to their monophosphate derivatives, with a high preference for the non-canonical purine nucleotides XTP (xanthosine triphosphate), dITP (deoxyinosine triphosphate) and ITP. Seems to function as a house-cleaning enzyme that removes non-canonical purine nucleotides from the nucleotide pool, thus preventing their incorporation into DNA/RNA and avoiding chromosomal lesions. This Treponema denticola (strain ATCC 35405 / DSM 14222 / CIP 103919 / JCM 8153 / KCTC 15104) protein is dITP/XTP pyrophosphatase.